The chain runs to 275 residues: Fructoselysine 3-epimerase (275 aa).

The Proton donor/acceptor role is filled by E148. E148, D181, H207, and E247 together coordinate a divalent metal cation. The active-site Proton donor/acceptor is E247.

The protein belongs to the FrlC family. As to quaternary structure, homooctamer. Requires Ni(2+) as cofactor. The cofactor is Co(2+).

It catalyses the reaction N(6)-(D-psicosyl)-L-lysine = N(6)-(D-fructosyl)-L-lysine. Its function is as follows. Catalyzes the reversible interconversion of fructoselysine with its C-3 epimer, psicoselysine. Allows E.coli to utilize psicoselysine for growth. Does not act on psicose or fructoselysine 6-phosphate. The chain is Fructoselysine 3-epimerase (frlC) from Escherichia coli O157:H7.